Consider the following 166-residue polypeptide: Ribosome maturation factor RimM (166 aa).

Positions 95-164 (EEEYYAYELV…KKIIVKEELL (70 aa)) constitute a PRC barrel domain.

The protein belongs to the RimM family. Binds ribosomal protein uS19.

Its subcellular location is the cytoplasm. In terms of biological role, an accessory protein needed during the final step in the assembly of 30S ribosomal subunit, possibly for assembly of the head region. Essential for efficient processing of 16S rRNA. May be needed both before and after RbfA during the maturation of 16S rRNA. It has affinity for free ribosomal 30S subunits but not for 70S ribosomes. The polypeptide is Ribosome maturation factor RimM (Aquifex aeolicus (strain VF5)).